The following is a 208-amino-acid chain: Small ribosomal subunit protein uS2 (208 aa).

The protein belongs to the universal ribosomal protein uS2 family.

In Cenarchaeum symbiosum (strain A), this protein is Small ribosomal subunit protein uS2.